The sequence spans 369 residues: S-adenosyl-L-methionine-dependent uroporphyrinogen III methyltransferase, chloroplastic (369 aa).

The transit peptide at 1-28 (MALVQRIPISSSSIRNWQQARTNLTPIC) directs the protein to the chloroplast. Residues P124, 200–202 (GGD), 230–231 (TA), M284, and T341 each bind S-adenosyl-L-homocysteine.

This sequence belongs to the precorrin methyltransferase family. Mostly expressed in leaves, and, to a lower extent, in stems, flowers and siliques.

Its subcellular location is the plastid. The protein localises to the chloroplast. It catalyses the reaction uroporphyrinogen III + 2 S-adenosyl-L-methionine = precorrin-2 + 2 S-adenosyl-L-homocysteine + H(+). Its pathway is porphyrin-containing compound metabolism; siroheme biosynthesis; precorrin-2 from uroporphyrinogen III: step 1/1. Its function is as follows. Essential protein required for siroheme biosynthesis. Catalyzes the two successive C-2 and C-7 methylation reactions involved in the conversion of uroporphyrinogen III to precorrin-2 via the intermediate formation of precorrin-1. It is a step in the biosynthesis of siroheme. Promotes nitrogen and sulfur assimilation as well as photosynthesis efficiency by triggering chlorophyll, nitrite reductase (NiR) and sulfite reductase (SiR) biosynthesis. The protein is S-adenosyl-L-methionine-dependent uroporphyrinogen III methyltransferase, chloroplastic of Arabidopsis thaliana (Mouse-ear cress).